The chain runs to 259 residues: MWAIGGVQLNSRLLLGTAQYPSPQLMSDAVKAAGVEIITVSLRRQLSPQKENYFWDLLRSLPCHLLPNTAGCSSVKEAVNTARAARELFNTHWIKLEIIGDEYTLQPNPFELVNAATILVKEGFEVFPYCTEDLILCQRLVDAGCRVLMPWAAPIGSGRGLMNTYALQLLRERFPKNILIIDAGLGRPSHAAQVMEMGFDAVLLNSAVALAMDPVVMAAGFAKAVEGGRLGYEGGMIKARNVAKATTPLIGKPFLIEKP.

K95 (schiff-base intermediate with DXP) is an active-site residue. 1-deoxy-D-xylulose 5-phosphate is bound by residues G156, 183–184 (AG), and 205–206 (NS).

It belongs to the ThiG family. In terms of assembly, homotetramer. Forms heterodimers with either ThiH or ThiS.

It is found in the cytoplasm. The catalysed reaction is [ThiS sulfur-carrier protein]-C-terminal-Gly-aminoethanethioate + 2-iminoacetate + 1-deoxy-D-xylulose 5-phosphate = [ThiS sulfur-carrier protein]-C-terminal Gly-Gly + 2-[(2R,5Z)-2-carboxy-4-methylthiazol-5(2H)-ylidene]ethyl phosphate + 2 H2O + H(+). Its pathway is cofactor biosynthesis; thiamine diphosphate biosynthesis. Its function is as follows. Catalyzes the rearrangement of 1-deoxy-D-xylulose 5-phosphate (DXP) to produce the thiazole phosphate moiety of thiamine. Sulfur is provided by the thiocarboxylate moiety of the carrier protein ThiS. In vitro, sulfur can be provided by H(2)S. This Coxiella burnetii (strain CbuK_Q154) (Coxiella burnetii (strain Q154)) protein is Thiazole synthase.